Reading from the N-terminus, the 170-residue chain is Ribosome maturation factor RimM (170 aa).

Positions 95–168 (EDAYYYHEIV…IIKVQLMEGM (74 aa)) constitute a PRC barrel domain.

The protein belongs to the RimM family. In terms of assembly, binds ribosomal protein uS19.

The protein resides in the cytoplasm. In terms of biological role, an accessory protein needed during the final step in the assembly of 30S ribosomal subunit, possibly for assembly of the head region. Essential for efficient processing of 16S rRNA. May be needed both before and after RbfA during the maturation of 16S rRNA. It has affinity for free ribosomal 30S subunits but not for 70S ribosomes. In Oceanobacillus iheyensis (strain DSM 14371 / CIP 107618 / JCM 11309 / KCTC 3954 / HTE831), this protein is Ribosome maturation factor RimM.